The following is a 292-amino-acid chain: 4-diphosphocytidyl-2-C-methyl-D-erythritol kinase (292 aa).

The active site involves Lys-20. Position 103–113 (103–113 (PMGGGIGGGSS)) interacts with ATP. Asp-145 is an active-site residue.

This sequence belongs to the GHMP kinase family. IspE subfamily.

The catalysed reaction is 4-CDP-2-C-methyl-D-erythritol + ATP = 4-CDP-2-C-methyl-D-erythritol 2-phosphate + ADP + H(+). It participates in isoprenoid biosynthesis; isopentenyl diphosphate biosynthesis via DXP pathway; isopentenyl diphosphate from 1-deoxy-D-xylulose 5-phosphate: step 3/6. Its function is as follows. Catalyzes the phosphorylation of the position 2 hydroxy group of 4-diphosphocytidyl-2C-methyl-D-erythritol. The polypeptide is 4-diphosphocytidyl-2-C-methyl-D-erythritol kinase (Cupriavidus necator (strain ATCC 17699 / DSM 428 / KCTC 22496 / NCIMB 10442 / H16 / Stanier 337) (Ralstonia eutropha)).